The primary structure comprises 186 residues: Large ribosomal subunit protein uL10 (186 aa).

The protein belongs to the universal ribosomal protein uL10 family. In terms of assembly, part of the ribosomal stalk of the 50S ribosomal subunit. The N-terminus interacts with L11 and the large rRNA to form the base of the stalk. The C-terminus forms an elongated spine to which L12 dimers bind in a sequential fashion forming a multimeric L10(L12)X complex.

In terms of biological role, forms part of the ribosomal stalk, playing a central role in the interaction of the ribosome with GTP-bound translation factors. The chain is Large ribosomal subunit protein uL10 from Nitrosococcus oceani (strain ATCC 19707 / BCRC 17464 / JCM 30415 / NCIMB 11848 / C-107).